The chain runs to 307 residues: Glutathione synthetase (307 aa).

In terms of domain architecture, ATP-grasp spans 120–304; the sequence is KLGALRYSHL…VSDKVIEKLL (185 aa). 146–202 is a binding site for ATP; sequence AQINHDVVVKPLGGKGGQGVIRLTKDSPGIKAMIELITSQEQLPVMMQKFIPEVKEG. Mg(2+) is bound by residues glutamate 275 and asparagine 277.

The protein belongs to the prokaryotic GSH synthase family. Mg(2+) is required as a cofactor. Requires Mn(2+) as cofactor.

The catalysed reaction is gamma-L-glutamyl-L-cysteine + glycine + ATP = glutathione + ADP + phosphate + H(+). It participates in sulfur metabolism; glutathione biosynthesis; glutathione from L-cysteine and L-glutamate: step 2/2. This chain is Glutathione synthetase, found in Prochlorococcus marinus subsp. pastoris (strain CCMP1986 / NIES-2087 / MED4).